The primary structure comprises 525 residues: Putative EGF-like domain-containing protein R659 (525 aa).

The N-terminal stretch at 1–24 (MGNKWCGIFLTILLLAQMSQTIFG) is a signal peptide. 6 N-linked (GlcNAc...) asparagine; by host glycosylation sites follow: Asn-60, Asn-77, Asn-171, Asn-181, Asn-268, and Asn-281. In terms of domain architecture, EGF-like spans 317 to 359 (LTQGCGNCDSNAECVFVSGSNSIVPKYQCKCKSGYVGNGTHCS). 3 cysteine pairs are disulfide-bonded: Cys-321/Cys-330, Cys-324/Cys-345, and Cys-347/Cys-358. N-linked (GlcNAc...) asparagine; by host glycans are attached at residues Asn-354 and Asn-411.

The protein localises to the secreted. The polypeptide is Putative EGF-like domain-containing protein R659 (Acanthamoeba polyphaga (Amoeba)).